The sequence spans 199 residues: Acireductone dioxygenase 2 (199 aa).

Fe(2+) contacts are provided by histidine 98, histidine 100, glutamate 104, and histidine 143. The Ni(2+) site is built by histidine 98, histidine 100, glutamate 104, and histidine 143.

This sequence belongs to the acireductone dioxygenase (ARD) family. Fe(2+) serves as cofactor. Ni(2+) is required as a cofactor.

It localises to the cytoplasm. The protein resides in the nucleus. The catalysed reaction is 1,2-dihydroxy-5-(methylsulfanyl)pent-1-en-3-one + O2 = 4-methylsulfanyl-2-oxobutanoate + formate + 2 H(+). It catalyses the reaction 1,2-dihydroxy-5-(methylsulfanyl)pent-1-en-3-one + O2 = 3-(methylsulfanyl)propanoate + CO + formate + 2 H(+). It participates in amino-acid biosynthesis; L-methionine biosynthesis via salvage pathway; L-methionine from S-methyl-5-thio-alpha-D-ribose 1-phosphate: step 5/6. Catalyzes 2 different reactions between oxygen and the acireductone 1,2-dihydroxy-3-keto-5-methylthiopentene (DHK-MTPene) depending upon the metal bound in the active site. Fe-containing acireductone dioxygenase (Fe-ARD) produces formate and 2-keto-4-methylthiobutyrate (KMTB), the alpha-ketoacid precursor of methionine in the methionine recycle pathway. Ni-containing acireductone dioxygenase (Ni-ARD) produces methylthiopropionate, carbon monoxide and formate, and does not lie on the methionine recycle pathway. This Vitis vinifera (Grape) protein is Acireductone dioxygenase 2.